A 463-amino-acid polypeptide reads, in one-letter code: Putative sodium-coupled neutral amino acid transporter 11 (463 aa).

The segment at 1 to 27 (MGYPGQRPVIPPQSHRDDRETLVSEHK) is disordered. Positions 14–25 (SHRDDRETLVSE) are enriched in basic and acidic residues. A run of 11 helical transmembrane segments spans residues 38-58 (AVFN…PYSM), 65-85 (LGIL…ILLI), 105-125 (GFPG…IAMI), 150-170 (LLIG…LPLS), 178-198 (LGKI…IVVA), 225-245 (VGVM…YGSL), 256-276 (IIHV…TCGY), 298-320 (VTFG…CFVT), 336-356 (VCHI…SLLI), 358-378 (CLGI…IFII), and 397-417 (IMSC…FVMA). N-linked (GlcNAc...) asparagine glycans are attached at residues N437, N442, and N458.

This sequence belongs to the amino acid/polyamine transporter 2 family.

It is found in the membrane. Putative sodium-dependent amino acid/proton antiporter. The sequence is that of Putative sodium-coupled neutral amino acid transporter 11 (SLC38A11) from Bos taurus (Bovine).